Reading from the N-terminus, the 445-residue chain is Bifunctional protein GlmU (445 aa).

Residues 1-218 (MRALVLAAGK…LLEITGVNTR (218 aa)) form a pyrophosphorylase region. UDP-N-acetyl-alpha-D-glucosamine-binding positions include 6-9 (LAAG), Lys20, Gln69, 74-75 (GT), 96-98 (YGD), Gly134, Glu147, Asn162, and Asn216. Residue Asp98 participates in Mg(2+) binding. Asn216 provides a ligand contact to Mg(2+). The segment at 219–239 (KTLVWLEEQLRMRKIEELLEN) is linker. An N-acetyltransferase region spans residues 240-445 (GVTILDPATT…GWVLKKRKEE (206 aa)). The UDP-N-acetyl-alpha-D-glucosamine site is built by Arg321 and Lys339. His351 functions as the Proton acceptor in the catalytic mechanism. The UDP-N-acetyl-alpha-D-glucosamine site is built by Tyr354 and Asn365. Residues Ala368, 374 to 375 (NY), Ser393, Ala411, and Arg428 contribute to the acetyl-CoA site.

In the N-terminal section; belongs to the N-acetylglucosamine-1-phosphate uridyltransferase family. The protein in the C-terminal section; belongs to the transferase hexapeptide repeat family. In terms of assembly, homotrimer. Mg(2+) serves as cofactor.

It is found in the cytoplasm. It catalyses the reaction alpha-D-glucosamine 1-phosphate + acetyl-CoA = N-acetyl-alpha-D-glucosamine 1-phosphate + CoA + H(+). The catalysed reaction is N-acetyl-alpha-D-glucosamine 1-phosphate + UTP + H(+) = UDP-N-acetyl-alpha-D-glucosamine + diphosphate. The protein operates within nucleotide-sugar biosynthesis; UDP-N-acetyl-alpha-D-glucosamine biosynthesis; N-acetyl-alpha-D-glucosamine 1-phosphate from alpha-D-glucosamine 6-phosphate (route II): step 2/2. It functions in the pathway nucleotide-sugar biosynthesis; UDP-N-acetyl-alpha-D-glucosamine biosynthesis; UDP-N-acetyl-alpha-D-glucosamine from N-acetyl-alpha-D-glucosamine 1-phosphate: step 1/1. Its pathway is bacterial outer membrane biogenesis; LPS lipid A biosynthesis. Functionally, catalyzes the last two sequential reactions in the de novo biosynthetic pathway for UDP-N-acetylglucosamine (UDP-GlcNAc). The C-terminal domain catalyzes the transfer of acetyl group from acetyl coenzyme A to glucosamine-1-phosphate (GlcN-1-P) to produce N-acetylglucosamine-1-phosphate (GlcNAc-1-P), which is converted into UDP-GlcNAc by the transfer of uridine 5-monophosphate (from uridine 5-triphosphate), a reaction catalyzed by the N-terminal domain. The chain is Bifunctional protein GlmU from Thermotoga sp. (strain RQ2).